The sequence spans 207 residues: Nucleoplasmin-2 (207 aa).

Over residues 1–15 the composition is skewed to polar residues; that stretch reads MSRHSTSSVTETTAK. Disordered regions lie at residues 1 to 20 and 121 to 207; these read MSRH…MLWG and DLTW…VTKK. Positions 123 to 147 are enriched in acidic residues; sequence TWEDDEEEEEEEEEEDEDEDADISL. The acidic tract A2 stretch occupies residues 129–152; the sequence is EEEEEEEEEDEDEDADISLEEIPV. The Bipartite nuclear localization signal motif lies at 165 to 180; it reads SIAKKKKVEKEEDETV. Residues 198-207 are compositionally biased toward basic residues; that stretch reads PRAKKPVTKK.

The protein belongs to the nucleoplasmin family. In terms of assembly, homopentamer, when bound to H2A-H2B dimers only. Homodecamer of two stacked pentamers, when bound to H2A-H2B dimers and H3-H4 tetramers simultaneously. Ovary specific.

Its subcellular location is the nucleus. Core histones chaperone involved in chromatin reprogramming, specially during fertilization and early embryonic development. Probably involved in sperm DNA decondensation during fertilization. The chain is Nucleoplasmin-2 (Npm2) from Mus musculus (Mouse).